The chain runs to 516 residues: Na(+)/H(+) antiporter NhaB (516 aa).

The next 12 helical transmembrane spans lie at 23–43 (LALIIFLIVNPLVFAVAPFVA), 61–80 (CYPLLPGGLLAIEALLIGMT), 97–117 (LLLMFMVAGIYFMKQLLLFVF), 120–140 (LLLGIRSKMLLSLAFCLAAAF), 144–164 (FLDALTVVAVVISVAVGFYGI), 202–222 (LMMHAGVGTALGGVMTMVGEP), 238–258 (FFLRMAPVTLPVMVCGLLTCL), 303–323 (ALIGVWLIVALAFHLAEVGLI), 348–368 (TEALPFTALLTVFFSIVAVII), 391–411 (LFYLFNGLLSSISDNVFVGTV), 447–467 (ATPNGQAAFLFLLTSALAPLI), and 475–495 (VWMALPYTIVLTLVGLLCVEF).

Belongs to the NhaB Na(+)/H(+) (TC 2.A.34) antiporter family.

The protein localises to the cell inner membrane. The catalysed reaction is 2 Na(+)(in) + 3 H(+)(out) = 2 Na(+)(out) + 3 H(+)(in). Functionally, na(+)/H(+) antiporter that extrudes sodium in exchange for external protons. The polypeptide is Na(+)/H(+) antiporter NhaB (Klebsiella pneumoniae subsp. pneumoniae (strain ATCC 700721 / MGH 78578)).